Reading from the N-terminus, the 391-residue chain is Processive diacylglycerol beta-glucosyltransferase (391 aa).

This sequence belongs to the glycosyltransferase 28 family. UgtP subfamily.

Its subcellular location is the cell membrane. It catalyses the reaction a 1,2-diacyl-3-O-(beta-D-glucopyranosyl)-sn-glycerol + UDP-alpha-D-glucose = a 1,2-diacyl-3-O-(beta-D-Glc-(1-&gt;6)-beta-D-Glc)-sn-glycerol + UDP + H(+). The enzyme catalyses a 1,2-diacyl-sn-glycerol + UDP-alpha-D-glucose = a 1,2-diacyl-3-O-(beta-D-glucopyranosyl)-sn-glycerol + UDP + H(+). It functions in the pathway glycolipid metabolism; diglucosyl-diacylglycerol biosynthesis. Its function is as follows. Processive glucosyltransferase involved in the biosynthesis of both the bilayer- and non-bilayer-forming membrane glucolipids. Is able to successively transfer two glucosyl residues to diacylglycerol (DAG), thereby catalyzing the formation of beta-monoglucosyl-DAG (3-O-(beta-D-glucopyranosyl)-1,2-diacyl-sn-glycerol) and beta-diglucosyl-DAG (3-O-(beta-D-glucopyranosyl-beta-(1-&gt;6)-D-glucopyranosyl)-1,2-diacyl-sn-glycerol). Beta-diglucosyl-DAG is the predominant glycolipid found in Bacillales and is also used as a membrane anchor for lipoteichoic acid (LTA). This chain is Processive diacylglycerol beta-glucosyltransferase, found in Staphylococcus haemolyticus (strain JCSC1435).